The following is a 164-amino-acid chain: Ribosome maturation factor RimM (164 aa).

The region spanning 90–161 (KGSYFIADLI…TVTIKPLEIW (72 aa)) is the PRC barrel domain.

It belongs to the RimM family. As to quaternary structure, binds ribosomal protein uS19.

It is found in the cytoplasm. Its function is as follows. An accessory protein needed during the final step in the assembly of 30S ribosomal subunit, possibly for assembly of the head region. Essential for efficient processing of 16S rRNA. May be needed both before and after RbfA during the maturation of 16S rRNA. It has affinity for free ribosomal 30S subunits but not for 70S ribosomes. This Clostridium botulinum (strain Hall / ATCC 3502 / NCTC 13319 / Type A) protein is Ribosome maturation factor RimM.